The following is a 101-amino-acid chain: Replication restart protein PriB (101 aa).

Residues 1-101 (MTTNNLVLAG…LHAENVELKT (101 aa)) form the SSB domain.

It belongs to the PriB family. Homodimer. Interacts with PriA and DnaT. Component of the replication restart primosome. Primosome assembly occurs via a 'hand-off' mechanism. PriA binds to replication forks, subsequently PriB then DnaT bind; DnaT then displaces ssDNA to generate the helicase loading substrate.

Its function is as follows. Involved in the restart of stalled replication forks, which reloads the replicative helicase on sites other than the origin of replication; the PriA-PriB pathway is the major replication restart pathway. During primosome assembly it facilitates complex formation between PriA and DnaT on DNA; stabilizes PriA on DNA. Stimulates the DNA unwinding activity of PriA helicase. This is Replication restart protein PriB from Shewanella piezotolerans (strain WP3 / JCM 13877).